The chain runs to 120 residues: Chemokine vCXCL1 (120 aa).

The protein belongs to the intercrine alpha (chemokine CxC) family. As to quaternary structure, interacts with host CXCR1 and CXCR2.

In terms of biological role, acts as a functional chemokine, inducing calcium mobilization, chemotaxis, and degranulation of neutrophils. Contributes to the induction of neutrophil chemotaxis by interacting with host CXCR1 and CXCR2 receptors. The polypeptide is Chemokine vCXCL1 (UL146) (Human cytomegalovirus (strain Merlin) (HHV-5)).